The sequence spans 329 residues: 4-hydroxythreonine-4-phosphate dehydrogenase (329 aa).

Residues H136 and T137 each contribute to the substrate site. A divalent metal cation contacts are provided by H166, H211, and H266. Substrate-binding residues include K274, N283, and R292.

Belongs to the PdxA family. In terms of assembly, homodimer. Zn(2+) is required as a cofactor. Mg(2+) serves as cofactor. The cofactor is Co(2+).

Its subcellular location is the cytoplasm. The catalysed reaction is 4-(phosphooxy)-L-threonine + NAD(+) = 3-amino-2-oxopropyl phosphate + CO2 + NADH. The protein operates within cofactor biosynthesis; pyridoxine 5'-phosphate biosynthesis; pyridoxine 5'-phosphate from D-erythrose 4-phosphate: step 4/5. In terms of biological role, catalyzes the NAD(P)-dependent oxidation of 4-(phosphooxy)-L-threonine (HTP) into 2-amino-3-oxo-4-(phosphooxy)butyric acid which spontaneously decarboxylates to form 3-amino-2-oxopropyl phosphate (AHAP). The sequence is that of 4-hydroxythreonine-4-phosphate dehydrogenase from Neisseria meningitidis serogroup A / serotype 4A (strain DSM 15465 / Z2491).